We begin with the raw amino-acid sequence, 74 residues long: Mitochondrial import receptor subunit TOM6 homolog (74 aa).

A compositionally biased stretch (polar residues) spans 1-16; sequence MASSTVPVSAAGSANE. A disordered region spans residues 1 to 22; that stretch reads MASSTVPVSAAGSANETPEIPD. N-acetylalanine is present on Ala-2.

Belongs to the Tom6 family. In terms of assembly, forms part of the preprotein translocase complex of the outer mitochondrial membrane (TOM complex) which consists of at least 7 different proteins (TOMM5, TOMM6, TOMM7, TOMM20, TOMM22, TOMM40 and TOMM70).

The protein resides in the mitochondrion outer membrane. The protein is Mitochondrial import receptor subunit TOM6 homolog (TOMM6) of Homo sapiens (Human).